Here is a 215-residue protein sequence, read N- to C-terminus: Probable glutathione S-transferase GSTF2 (215 aa).

A GST N-terminal domain is found at 2–83; that stretch reads APMKLYGSTL…YVCRKNKPEL (82 aa). Residues Ser-12, 41–42, 54–55, and 67–68 contribute to the glutathione site; these read HK, QV, and ES. Residues 88 to 215 enclose the GST C-terminal domain; the sequence is DLKESAMVDV…KVASLMKPPA (128 aa).

It belongs to the GST superfamily. Phi family. In terms of tissue distribution, constitutively expressed in roots. Expressed in anthers, callus, panicles, sheaths and stems (at protein level).

The enzyme catalyses RX + glutathione = an S-substituted glutathione + a halide anion + H(+). Conjugation of reduced glutathione to a wide number of exogenous and endogenous hydrophobic electrophiles. The chain is Probable glutathione S-transferase GSTF2 (GSTF2) from Oryza sativa subsp. japonica (Rice).